The primary structure comprises 57 residues: DNA-directed RNA polymerase subunit Rpo6 (57 aa).

This sequence belongs to the archaeal Rpo6/eukaryotic RPB6 RNA polymerase subunit family. In terms of assembly, part of the RNA polymerase complex.

The protein localises to the cytoplasm. It carries out the reaction RNA(n) + a ribonucleoside 5'-triphosphate = RNA(n+1) + diphosphate. Functionally, DNA-dependent RNA polymerase (RNAP) catalyzes the transcription of DNA into RNA using the four ribonucleoside triphosphates as substrates. The protein is DNA-directed RNA polymerase subunit Rpo6 of Thermococcus onnurineus (strain NA1).